A 66-amino-acid polypeptide reads, in one-letter code: Large ribosomal subunit protein bL31 (66 aa).

Positions 16, 18, 36, and 39 each coordinate Zn(2+).

Belongs to the bacterial ribosomal protein bL31 family. Type A subfamily. In terms of assembly, part of the 50S ribosomal subunit. Zn(2+) serves as cofactor.

In terms of biological role, binds the 23S rRNA. In Campylobacter lari (strain RM2100 / D67 / ATCC BAA-1060), this protein is Large ribosomal subunit protein bL31.